The following is a 411-amino-acid chain: Inhibin beta B chain (411 aa).

An N-terminal signal peptide occupies residues 1-28 (MDGLPGRALGAACLLLLVAGWLGPEAWG). A disordered region spans residues 28 to 69 (GSPTPPPSPAAPPPPPPPGAPGGSQDTCTSCGGGGGGFRRPE). Positions 29 to 296 (SPTPPPSPAA…GDSRHRIRKR (268 aa)) are excised as a propeptide. Positions 30-47 (PTPPPSPAAPPPPPPPGA) are enriched in pro residues. N-linked (GlcNAc...) asparagine glycosylation occurs at asparagine 97. 4 cysteine pairs are disulfide-bonded: cysteine 300–cysteine 308, cysteine 307–cysteine 376, cysteine 336–cysteine 408, and cysteine 340–cysteine 410.

Belongs to the TGF-beta family. Dimeric, linked by one or more disulfide bonds. Inhibin B is a dimer of alpha and beta-B. Activin B is a homodimer of beta-B. Activin AB is a dimer of beta-A and beta-B. Interacts with FST and FSTL3. Activin B interacts with BMPR2. Uterus, testis, ovary, lung, kidney, brain, CJ7 embryonic stem cells, and possibly in liver.

The protein resides in the secreted. Its function is as follows. Inhibins and activins inhibit and activate, respectively, the secretion of follitropin by the pituitary gland. Inhibins/activins are involved in regulating a number of diverse functions such as hypothalamic and pituitary hormone secretion, gonadal hormone secretion, germ cell development and maturation, erythroid differentiation, insulin secretion, nerve cell survival, embryonic axial development or bone growth, depending on their subunit composition. Inhibins appear to oppose the functions of activins. In terms of biological role, activin B is a dimer of alpha and beta-B that plays a role in several essential biological processes including embryonic development, stem cell maintenance and differentiation, haematopoiesis, cell proliferation and wound healing. Signals through type I receptor ACVR1C, abundantly expressed in pancreatic beta cells, and type II receptors like ACVR2A. Upon ligand binding, these receptors phosphorylate intracellular signaling mediators SMAD2 and SMAD3, which form a complex with SMAD4, translocate to the nucleus, and regulate gene expression. Plays a crucial role in the induction of hepcidin by inflammation through activation of ACVR1C and subsequent phosphorylation of SMAD1/5/8. Regulates adipocyte lipid metabolism by decreasing non-esterified fatty acids and glycerol release and increases intracellular triglyceride content. Stimulates wound healing by promoting cell migration and hair follicle regeneration through the JNK and ERK signaling pathways downstream of RHOA. Functionally, inhibin B is a dimer of alpha and beta-B that plays a crucial role in the regulation of the reproductive system by inhibiting the secretion of follicle-stimulating hormone (FSH) from the anterior pituitary gland. Thereby, maintains reproductive homeostasis in both males and females. Acts as a more potent suppressor of FSH release than inhibin A. Functions as competitive receptor antagonist binding activin type II receptors with high affinity in the presence of the TGF-beta type III coreceptor/TGFBR3L. In Mus musculus (Mouse), this protein is Inhibin beta B chain (Inhbb).